Here is a 406-residue protein sequence, read N- to C-terminus: Uronyl 2-sulfotransferase (406 aa).

The Cytoplasmic portion of the chain corresponds to 1–49; sequence MKKKQQHPGGGADPWPHGAPMGGAPPGLGSWKRRVPLLPFLRFSLRDYG. The helical; Signal-anchor for type II membrane protein transmembrane segment at 50 to 70 threads the bilayer; sequence FCMATLLVFCLGSLLYQLSGG. Residues 71–406 lie on the Lumenal side of the membrane; it reads PPRFLLDLRQ…EKWLEDIYKR (336 aa). N-linked (GlcNAc...) asparagine glycosylation is found at Asn84, Asn140, and Asn155. Residue His168 is part of the active site. 2 N-linked (GlcNAc...) asparagine glycosylation sites follow: Asn173 and Asn319. A compositionally biased stretch (acidic residues) spans 387-399; the sequence is EPIDDEEQDDEKW. The segment at 387–406 is disordered; it reads EPIDDEEQDDEKWLEDIYKR.

This sequence belongs to the sulfotransferase 3 family. Widely expressed.

It localises to the golgi apparatus membrane. In terms of biological role, sulfotransferase that catalyzes the transfer of sulfate to the position 2 of uronyl residues in glycosaminoglycan chains. Has mainly activity toward iduronyl residues in dermatan sulfate, and weaker activity toward glucuronyl residues of chondroitin sulfate. Has little to no activity toward desulfated N-resulfated heparin or N-sulfoheparosan. In Homo sapiens (Human), this protein is Uronyl 2-sulfotransferase.